The primary structure comprises 375 residues: Probable protein-glutamate methylesterase BB_0415 (375 aa).

The Response regulatory domain occupies 6-120 (SVLIIEYFAV…SHEIKKEQII (115 aa)). One can recognise a CheB-type methylesterase domain in the interval 183–375 (KLRKFDIIAI…KLLKAILINS (193 aa)). Active-site residues include serine 195, histidine 221, and aspartate 317.

It carries out the reaction [protein]-L-glutamate 5-O-methyl ester + H2O = L-glutamyl-[protein] + methanol + H(+). The chain is Probable protein-glutamate methylesterase BB_0415 from Borreliella burgdorferi (strain ATCC 35210 / DSM 4680 / CIP 102532 / B31) (Borrelia burgdorferi).